The primary structure comprises 814 residues: Rho GTPase-activating protein 44 (814 aa).

Residues 14 to 249 (QTVGRAEKTE…IKAQQEAWVE (236 aa)) enclose the BAR domain. Residues 255-445 (KPLEEHLMIS…PIIQHADWFF (191 aa)) enclose the Rho-GAP domain. Disordered regions lie at residues 467 to 493 (ANYSSMPSPDMDPADRRQPEQARRPLS), 531 to 768 (SAGR…SMST), and 784 to 814 (STLRLSPLEHARRHSVTDKRDSEEESESTAL). Residues 479–489 (PADRRQPEQAR) are compositionally biased toward basic and acidic residues. Position 493 is a phosphoserine (Ser-493). 6 stretches are compositionally biased toward low complexity: residues 531 to 541 (SAGRKAACAPP), 567 to 581 (SPATPAPALSPSGAS), 598 to 612 (SPGSGQKGSPGSIQG), 622 to 637 (PQPAASPSQLPADQSP), 684 to 704 (SPYGLSYPPGYSMASGQLSPA), and 741 to 752 (SVSLSASSPQST). The segment at 727–814 (KPRQRPTLPP…SEEESESTAL (88 aa)) is interaction with BST2. The span at 790–805 (PLEHARRHSVTDKRDS) shows a compositional bias: basic and acidic residues. At Ser-805 the chain carries Phosphoserine. Residues 811 to 814 (STAL) carry the PDZ-binding motif.

Interacts with BST2 (via cytoplasmic domain). Interacts (probably via PDZ-binding motif) with SHANK3 (via PDZ domain); the interaction takes place in dendritic spines and promotes GRIA1 exocytosis. As to expression, expressed in brain, detected at high levels in hippocampal CA1 (at protein level).

It localises to the cell projection. The protein localises to the dendritic spine. It is found in the recycling endosome. The protein resides in the presynapse. Its subcellular location is the dendrite. GTPase-activating protein (GAP) that stimulates the GTPase activity of Rho-type GTPases. Thereby, controls Rho-type GTPases cycling between their active GTP-bound and inactive GDP-bound states. Acts as a GAP at least for CDC42 and RAC1. In neurons, is involved in dendritic spine formation and synaptic plasticity in a specific RAC1-GAP activity. Limits the initiation of exploratory dendritic filopodia. Recruited to actin-patches that seed filopodia, binds specifically to plasma membrane sections that are deformed inward by acto-myosin mediated contractile forces. Acts through GAP activity on RAC1 to reduce actin polymerization necessary for filopodia formation. In association with SHANK3, promotes GRIA1 exocytosis from recycling endosomes and spine morphological changes associated to long-term potentiation. The chain is Rho GTPase-activating protein 44 from Rattus norvegicus (Rat).